The following is a 379-amino-acid chain: Queuine tRNA-ribosyltransferase (379 aa).

D94 serves as the catalytic Proton acceptor. Residues 94–98 (DSGGF), D148, Q191, and G218 contribute to the substrate site. The segment at 249–255 (GVGSPDS) is RNA binding. D268 serves as the catalytic Nucleophile. An RNA binding; important for wobble base 34 recognition region spans residues 273–277 (TRIAR). Zn(2+) contacts are provided by C306, C308, C311, and H337.

The protein belongs to the queuine tRNA-ribosyltransferase family. As to quaternary structure, homodimer. Within each dimer, one monomer is responsible for RNA recognition and catalysis, while the other monomer binds to the replacement base PreQ1. The cofactor is Zn(2+).

It carries out the reaction 7-aminomethyl-7-carbaguanine + guanosine(34) in tRNA = 7-aminomethyl-7-carbaguanosine(34) in tRNA + guanine. The protein operates within tRNA modification; tRNA-queuosine biosynthesis. In terms of biological role, catalyzes the base-exchange of a guanine (G) residue with the queuine precursor 7-aminomethyl-7-deazaguanine (PreQ1) at position 34 (anticodon wobble position) in tRNAs with GU(N) anticodons (tRNA-Asp, -Asn, -His and -Tyr). Catalysis occurs through a double-displacement mechanism. The nucleophile active site attacks the C1' of nucleotide 34 to detach the guanine base from the RNA, forming a covalent enzyme-RNA intermediate. The proton acceptor active site deprotonates the incoming PreQ1, allowing a nucleophilic attack on the C1' of the ribose to form the product. After dissociation, two additional enzymatic reactions on the tRNA convert PreQ1 to queuine (Q), resulting in the hypermodified nucleoside queuosine (7-(((4,5-cis-dihydroxy-2-cyclopenten-1-yl)amino)methyl)-7-deazaguanosine). This is Queuine tRNA-ribosyltransferase from Bacillus cereus (strain Q1).